The sequence spans 58 residues: Sodium/potassium-transporting ATPase subunit gamma (58 aa).

Residues 20 to 39 traverse the membrane as a helical segment; it reads NGGLIFAALAFIVGLVIILS.

It belongs to the FXYD family. As to quaternary structure, regulatory subunit of the sodium/potassium-transporting ATPase which is composed of a catalytic alpha subunit, an auxiliary non-catalytic beta subunit and an additional regulatory subunit. In terms of tissue distribution, highest levels expressed in the kidney and spleen. Restricted to the basolateral membrane in renal epithelial cells and varies in its level of expression along the nephron.

The protein resides in the membrane. In terms of biological role, may be involved in forming the receptor site for cardiac glycoside binding or may modulate the transport function of the sodium ATPase. The chain is Sodium/potassium-transporting ATPase subunit gamma (FXYD2) from Bos taurus (Bovine).